A 348-amino-acid chain; its full sequence is Ion-translocating oxidoreductase complex subunit D (348 aa).

Helical transmembrane passes span 20-39 (VMRLTLLALVPGIAAQCYLF), 67-87 (YVVSASLKDSSALLTAALIAV), and 124-144 (AMVGYVLLLVSFPAPMTNWMA). FMN phosphoryl threonine is present on Thr-187. 4 helical membrane passes run 221–241 (WINLSFLAGGILLFMLRLIPW), 244–264 (PVAMLGTLAAASALAHYLAPA), 266–286 (FAMPEIELLSGATMLGAFFII), and 300–320 (LVFGALVGGLVFIIRHFGGYP).

This sequence belongs to the NqrB/RnfD family. As to quaternary structure, the complex is composed of six subunits: RnfA, RnfB, RnfC, RnfD, RnfE and RnfG. FMN serves as cofactor.

The protein resides in the cell inner membrane. Its function is as follows. Part of a membrane-bound complex that couples electron transfer with translocation of ions across the membrane. This chain is Ion-translocating oxidoreductase complex subunit D, found in Tolumonas auensis (strain DSM 9187 / NBRC 110442 / TA 4).